Consider the following 347-residue polypeptide: S-adenosylmethionine:tRNA ribosyltransferase-isomerase (347 aa).

It belongs to the QueA family. Monomer.

Its subcellular location is the cytoplasm. The enzyme catalyses 7-aminomethyl-7-carbaguanosine(34) in tRNA + S-adenosyl-L-methionine = epoxyqueuosine(34) in tRNA + adenine + L-methionine + 2 H(+). It participates in tRNA modification; tRNA-queuosine biosynthesis. Functionally, transfers and isomerizes the ribose moiety from AdoMet to the 7-aminomethyl group of 7-deazaguanine (preQ1-tRNA) to give epoxyqueuosine (oQ-tRNA). This chain is S-adenosylmethionine:tRNA ribosyltransferase-isomerase, found in Xylella fastidiosa (strain M12).